A 431-amino-acid chain; its full sequence is Large envelope protein (431 aa).

Gly-2 carries the N-myristoyl glycine; by host lipid modification. Residues 2–148 are pre-S1; it reads GNNIKVTFNP…PPLRDTHPHL (147 aa). The pre-S stretch occupies residues 2–207; sequence GNNIKVTFNP…PSTTGDPALS (206 aa). The Virion surface; in external conformation portion of the chain corresponds to 2 to 214; it reads GNNIKVTFNP…ALSPEMSPSS (213 aa). The Intravirion; in internal conformation portion of the chain corresponds to 2–286; the sequence is GNNIKVTFNP…NGFRWMYLRR (285 aa). N-linked (GlcNAc...) asparagine glycosylation occurs at Asn-3. Positions 115–147 are disordered; the sequence is IPRGLVPPQTPTNRDQGRKPTPPTPPLRDTHPH. A pre-S2 region spans residues 149–207; the sequence is TMKNQTFHLQGFVDGLRDLTTTERQHNAYRDPFTTLSPAVPTVSTILSPPSTTGDPALS. A helical membrane pass occupies residues 215–235; that stretch reads LLGLLAGLQVVYFLWTKILTI. Residues 236 to 286 lie on the Intravirion; in external conformation side of the membrane; the sequence is AQNLDWWCTSLSFPGGIPECTGQNSQFQTCKHLPTSCPPTCNGFRWMYLRR. A helical transmembrane segment spans residues 287–307; that stretch reads FIIYLLVLLLCLIFLLVLLDW. Residues 308-379 are Virion surface-facing; sequence KGLIPVCPLQ…WALARLSWLN (72 aa). Asn-351 is a glycosylation site (N-linked (GlcNAc...) asparagine; by host). The helical transmembrane segment at 380 to 400 threads the bilayer; sequence LLVPLLQWLGGISLIAWFLLI. The Intravirion segment spans residues 401-406; sequence WMIWFW. Residues 407–429 traverse the membrane as a helical segment; that stretch reads GPALLSILPPFIPIFVLFFLIWV. The Virion surface portion of the chain corresponds to 430-431; sequence YI.

This sequence belongs to the orthohepadnavirus major surface antigen family. As to quaternary structure, in its internal form (Li-HBsAg), interacts with the capsid protein and with the isoform S. Interacts with host chaperone CANX. Associates with host chaperone CANX through its pre-S2 N glycan; this association may be essential for isoform M proper secretion. In terms of assembly, interacts with isoform L. Interacts with the antigens of satellite virus HDV (HDVAgs); this interaction is required for encapsidation of HDV genomic RNA. Isoform M is N-terminally acetylated by host at a ratio of 90%, and N-glycosylated by host at the pre-S2 region. Post-translationally, myristoylated.

Its subcellular location is the virion membrane. Its function is as follows. The large envelope protein exists in two topological conformations, one which is termed 'external' or Le-HBsAg and the other 'internal' or Li-HBsAg. In its external conformation the protein attaches the virus to cell receptors and thereby initiating infection. This interaction determines the species specificity and liver tropism. This attachment induces virion internalization predominantly through caveolin-mediated endocytosis. The large envelope protein also assures fusion between virion membrane and endosomal membrane. In its internal conformation the protein plays a role in virion morphogenesis and mediates the contact with the nucleocapsid like a matrix protein. The middle envelope protein plays an important role in the budding of the virion. It is involved in the induction of budding in a nucleocapsid independent way. In this process the majority of envelope proteins bud to form subviral lipoprotein particles of 22 nm of diameter that do not contain a nucleocapsid. In Marmota monax (Woodchuck), this protein is Large envelope protein.